Consider the following 212-residue polypeptide: Glycerol-3-phosphate acyltransferase (212 aa).

A run of 6 helical transmembrane segments spans residues 8 to 28, 59 to 79, 90 to 110, 122 to 142, 148 to 168, and 169 to 189; these read IFLS…PFAV, AAAA…LWLA, VFAL…FLGF, ILLA…VIIA, SSLA…FGSG, and VAWY…LLLF.

The protein belongs to the PlsY family. Probably interacts with PlsX.

It is found in the cell inner membrane. It carries out the reaction an acyl phosphate + sn-glycerol 3-phosphate = a 1-acyl-sn-glycero-3-phosphate + phosphate. It participates in lipid metabolism; phospholipid metabolism. Its function is as follows. Catalyzes the transfer of an acyl group from acyl-phosphate (acyl-PO(4)) to glycerol-3-phosphate (G3P) to form lysophosphatidic acid (LPA). This enzyme utilizes acyl-phosphate as fatty acyl donor, but not acyl-CoA or acyl-ACP. In Bordetella petrii (strain ATCC BAA-461 / DSM 12804 / CCUG 43448), this protein is Glycerol-3-phosphate acyltransferase.